Here is a 369-residue protein sequence, read N- to C-terminus: Bi-functional coumaroyl CoA and feruloyl CoA ortho-hydroxylase Diox1 (369 aa).

Residues 209–319 (IREPMLVGSR…RISVPLFVNP (111 aa)) form the Fe2OG dioxygenase domain. Y225 is a 2-oxoglutarate binding site. Positions 240, 242, and 300 each coordinate Fe cation. The 2-oxoglutarate site is built by R310 and S312.

The protein belongs to the iron/ascorbate-dependent oxidoreductase family. Requires L-ascorbate as cofactor. Fe(2+) serves as cofactor.

It catalyses the reaction (E)-4-coumaroyl-CoA + 2-oxoglutarate + O2 = (E)-2,4-dihydroxycinnamoyl-CoA + succinate + CO2. The catalysed reaction is (E)-feruloyl-CoA + 2-oxoglutarate + O2 = (E)-6-hydroxyferuloyl-CoA + succinate + CO2. It functions in the pathway phenylpropanoid metabolism. 2-oxoglutarate (OG)- and Fe(II)-dependent dioxygenase (2OGD) involved in scopoletin and umbelliferone biosynthesis. Converts feruloyl CoA into 6'-hydroxyferuloyl CoA, and p-coumaroyl CoA into 2,4-dihydroxycinnamoyl-CoA. This is Bi-functional coumaroyl CoA and feruloyl CoA ortho-hydroxylase Diox1 from Ruta graveolens (Common rue).